Reading from the N-terminus, the 130-residue chain is UPF0713 protein YngL (130 aa).

The next 3 helical transmembrane spans lie at 4-25, 62-84, and 89-111; these read LSFLTFIMLILASYRLTHLIVF, MLNCYWCAGVWCAILIGLGYLFL, and IPLIFILAIAGAQAILETAVGVG.

This sequence belongs to the UPF0713 family.

It localises to the cell membrane. The protein is UPF0713 protein YngL (yngL) of Bacillus subtilis (strain 168).